We begin with the raw amino-acid sequence, 436 residues long: Methylenetetrahydrofolate--tRNA-(uracil-5-)-methyltransferase TrmFO (436 aa).

8-13 (GAGLAG) is an FAD binding site.

The protein belongs to the MnmG family. TrmFO subfamily. Requires FAD as cofactor.

It localises to the cytoplasm. The catalysed reaction is uridine(54) in tRNA + (6R)-5,10-methylene-5,6,7,8-tetrahydrofolate + NADH + H(+) = 5-methyluridine(54) in tRNA + (6S)-5,6,7,8-tetrahydrofolate + NAD(+). It carries out the reaction uridine(54) in tRNA + (6R)-5,10-methylene-5,6,7,8-tetrahydrofolate + NADPH + H(+) = 5-methyluridine(54) in tRNA + (6S)-5,6,7,8-tetrahydrofolate + NADP(+). Functionally, catalyzes the folate-dependent formation of 5-methyl-uridine at position 54 (M-5-U54) in all tRNAs. The chain is Methylenetetrahydrofolate--tRNA-(uracil-5-)-methyltransferase TrmFO from Persephonella marina (strain DSM 14350 / EX-H1).